A 268-amino-acid polypeptide reads, in one-letter code: Shikimate dehydrogenase (NADP(+)) (268 aa).

Shikimate contacts are provided by residues 14–16 (SKS) and T61. The Proton acceptor role is filled by K65. Shikimate is bound by residues N86 and D102. NADP(+) is bound by residues 126-130 (GAGGA), 149-154 (NRTFLK), and M213. Y215 serves as a coordination point for shikimate. Residue G238 participates in NADP(+) binding.

The protein belongs to the shikimate dehydrogenase family. As to quaternary structure, homodimer.

It carries out the reaction shikimate + NADP(+) = 3-dehydroshikimate + NADPH + H(+). The protein operates within metabolic intermediate biosynthesis; chorismate biosynthesis; chorismate from D-erythrose 4-phosphate and phosphoenolpyruvate: step 4/7. Its function is as follows. Involved in the biosynthesis of the chorismate, which leads to the biosynthesis of aromatic amino acids. Catalyzes the reversible NADPH linked reduction of 3-dehydroshikimate (DHSA) to yield shikimate (SA). The protein is Shikimate dehydrogenase (NADP(+)) of Haemophilus influenzae (strain PittGG).